The following is a 459-amino-acid chain: UDP-N-acetylmuramate--L-alanine ligase (459 aa).

Residue 113–119 (GSHGKTS) participates in ATP binding.

The protein belongs to the MurCDEF family.

The protein resides in the cytoplasm. The catalysed reaction is UDP-N-acetyl-alpha-D-muramate + L-alanine + ATP = UDP-N-acetyl-alpha-D-muramoyl-L-alanine + ADP + phosphate + H(+). It functions in the pathway cell wall biogenesis; peptidoglycan biosynthesis. Functionally, cell wall formation. This Desulfotalea psychrophila (strain LSv54 / DSM 12343) protein is UDP-N-acetylmuramate--L-alanine ligase.